The following is a 107-amino-acid chain: Putative double-stranded DNA mimic protein HS_0995 (107 aa).

This sequence belongs to the putative dsDNA mimic protein family.

In terms of biological role, may act as a double-stranded DNA (dsDNA) mimic. Probably regulates the activity of a dsDNA-binding protein. The sequence is that of Putative double-stranded DNA mimic protein HS_0995 from Histophilus somni (strain 129Pt) (Haemophilus somnus).